The following is a 347-amino-acid chain: NADH-ubiquinone oxidoreductase chain 2 (347 aa).

11 helical membrane-spanning segments follow: residues 1-21 (MNPLIFTTIVLTIIMGTMIVM), 25-45 (HWLTVWIGFEMNMLAVIPILM), 59-79 (YFLTQATASMLLMLAIIINLL), 96-116 (IIMTLAMAMKLGLSPFHFWVP), 122-142 (IQLSSGLILLTWQKLAPMSIL), 145-165 (IFPTINLNLMLLMSVLSVAIG), 178-198 (IMAYSSIAHMGWMTAIMAYNP), 201-221 (TLLNLVIYILLTTTTFMMFML), 237-257 (APLLTMTILTIMLSMGGLPPL), 276-296 (IITPTIMAVTALLNLYFYMRL), and 326-346 (VSPLIILSTLALPLSPILMLL).

It belongs to the complex I subunit 2 family. In terms of assembly, core subunit of respiratory chain NADH dehydrogenase (Complex I) which is composed of 45 different subunits. Interacts with TMEM242.

The protein localises to the mitochondrion inner membrane. The catalysed reaction is a ubiquinone + NADH + 5 H(+)(in) = a ubiquinol + NAD(+) + 4 H(+)(out). Functionally, core subunit of the mitochondrial membrane respiratory chain NADH dehydrogenase (Complex I) which catalyzes electron transfer from NADH through the respiratory chain, using ubiquinone as an electron acceptor. Essential for the catalytic activity and assembly of complex I. The polypeptide is NADH-ubiquinone oxidoreductase chain 2 (Boneia bidens (Manado fruit bat)).